The following is a 255-amino-acid chain: Myogenic factor 5 (255 aa).

One can recognise a bHLH domain in the interval 83 to 134; it reads DRRKAATMRERRRLKKVNQAFETLKRCTTTNPNQRLPKVEILRNAIQYIESL. The span at 221–242 shows a compositional bias: low complexity; the sequence is SLPIPDSITPSPTSSTDSLPRS. The disordered stretch occupies residues 221 to 246; that stretch reads SLPIPDSITPSPTSSTDSLPRSPDAH.

Efficient DNA binding requires dimerization with another bHLH protein.

The protein localises to the nucleus. Its function is as follows. Acts as a transcriptional activator that promotes transcription of muscle-specific target genes and plays a role in muscle differentiation. Induces fibroblasts to differentiate into myoblasts. Probable sequence specific DNA-binding protein. This Xenopus laevis (African clawed frog) protein is Myogenic factor 5 (myf5).